The sequence spans 399 residues: S-adenosylmethionine synthase (399 aa).

H15 contacts ATP. Residue D17 coordinates Mg(2+). E43 provides a ligand contact to K(+). Positions 56 and 99 each coordinate L-methionine. Residues 99-109 (QSADIAQGVDN) are flexible loop. ATP-binding positions include 174-176 (DGK), 244-245 (RF), D253, 259-260 (RK), A276, and K280. D253 provides a ligand contact to L-methionine. L-methionine is bound at residue K284.

This sequence belongs to the AdoMet synthase family. Homotetramer; dimer of dimers. Mg(2+) is required as a cofactor. It depends on K(+) as a cofactor.

It localises to the cytoplasm. It catalyses the reaction L-methionine + ATP + H2O = S-adenosyl-L-methionine + phosphate + diphosphate. Its pathway is amino-acid biosynthesis; S-adenosyl-L-methionine biosynthesis; S-adenosyl-L-methionine from L-methionine: step 1/1. Catalyzes the formation of S-adenosylmethionine (AdoMet) from methionine and ATP. The overall synthetic reaction is composed of two sequential steps, AdoMet formation and the subsequent tripolyphosphate hydrolysis which occurs prior to release of AdoMet from the enzyme. The sequence is that of S-adenosylmethionine synthase from Salinispora tropica (strain ATCC BAA-916 / DSM 44818 / JCM 13857 / NBRC 105044 / CNB-440).